We begin with the raw amino-acid sequence, 116 residues long: MRHQCRVPQLGRPADQRKAMLRGLTTQLIREGRVTTTKARAKALRDETERMISLAKDGSLAARRRALGYIYDKQLVHALFDKASERYGDRNGGYTRIIRTVPRRGDNAEMAIIELV.

Belongs to the bacterial ribosomal protein bL17 family. Part of the 50S ribosomal subunit. Contacts protein L32.

This Synechococcus sp. (strain RCC307) protein is Large ribosomal subunit protein bL17.